A 191-amino-acid polypeptide reads, in one-letter code: Uridylate kinase (191 aa).

12 to 17 (GAGKGT) is a binding site for ATP. Positions 33–63 (SAGDCLREEQNRPGSKYGNLIKEYIKDGKIV) are NMP. A ribonucleoside 5'-phosphate is bound by residues Arg-39, 61–63 (KIV), 91–94 (GFPR), and Gln-98. Residues 128–138 (HRGKTSGRSDD) are LID. Arg-129 is a binding site for ATP. The a ribonucleoside 5'-phosphate site is built by Arg-135 and Arg-146. Residue Gln-174 coordinates ATP.

This sequence belongs to the adenylate kinase family. UMP-CMP kinase subfamily. In terms of assembly, monomer. Mg(2+) serves as cofactor.

The protein localises to the cytoplasm. It localises to the nucleus. The enzyme catalyses UMP + ATP = UDP + ADP. In terms of biological role, catalyzes the phosphorylation of pyrimidine nucleoside monophosphates at the expense of ATP. Plays an important role in de novo pyrimidine nucleotide biosynthesis. Has preference for UMP and dUMP as phosphate acceptors, but can also use CMP, dCMP and AMP. The sequence is that of Uridylate kinase from Schizosaccharomyces pombe (strain 972 / ATCC 24843) (Fission yeast).